Consider the following 480-residue polypeptide: 2-phosphoxylose phosphatase 1 (480 aa).

Residues 1–6 (MLYRNR) lie on the Cytoplasmic side of the membrane. Residues 7–27 (FLVLLALAGLLAFLSLSLQFF) traverse the membrane as a helical; Signal-anchor for type II membrane protein segment. The Lumenal portion of the chain corresponds to 28 to 480 (HLIPVSTTKN…YYDACHGEGA (453 aa)). Residue His97 is the Nucleophile of the active site. N-linked (GlcNAc...) asparagine glycans are attached at residues Asn194, Asn305, and Asn354. Asp379 acts as the Proton donor in catalysis.

This sequence belongs to the histidine acid phosphatase family. In terms of assembly, interacts with B3GAT3; the interaction increases the 2-phosphoxylose phosphatase activity of PXYLP1 during completion of linkage region formation in a B3GAT3-mediated manner.

It localises to the golgi apparatus membrane. It catalyses the reaction 3-O-[beta-D-GlcA-(1-&gt;3)-beta-D-Gal-(1-&gt;3)-beta-D-Gal-(1-&gt;4)-beta-D-2-O-P-Xyl]-L-seryl-[protein] + H2O = 3-O-(beta-D-GlcA-(1-&gt;3)-beta-D-Gal-(1-&gt;3)-beta-D-Gal-(1-&gt;4)-beta-D-Xyl)-L-seryl-[protein] + phosphate. Its function is as follows. Responsible for the 2-O-dephosphorylation of xylose in the glycosaminoglycan-protein linkage region of proteoglycans thereby regulating the amount of mature glycosaminoglycan (GAG) chains. Sulfated glycosaminoglycans (GAGs), including heparan sulfate and chondroitin sulfate, are synthesized on the so-called common GAG-protein linkage region (GlcUAbeta1-3Galbeta1-3Galbeta1-4Xylbeta1-O-Ser) of core proteins, which is formed by the stepwise addition of monosaccharide residues by the respective specific glycosyltransferases. Xylose 2-O-dephosphorylation during completion of linkage region formation is a prerequisite for the initiation and efficient elongation of the repeating disaccharide region of GAG chains. The protein is 2-phosphoxylose phosphatase 1 of Rattus norvegicus (Rat).